A 385-amino-acid polypeptide reads, in one-letter code: Urotensin-2 receptor (385 aa).

The Extracellular segment spans residues 1–53; the sequence is MALSLESTSFPMLAVSRSTASELPGGFNVSHNSSWTGPTDPSSLQDLVATGVI. N-linked (GlcNAc...) asparagine glycans are attached at residues N28 and N32. A helical membrane pass occupies residues 54–76; it reads GAVLSTMGVVGVVGNVYTLVVMC. Residues 77–86 are Cytoplasmic-facing; sequence RFLRASASMY. A helical membrane pass occupies residues 87-112; that stretch reads VYVVNLALADLLYLLSIPFIVATYVT. Topologically, residues 113 to 123 are extracellular; the sequence is KDWHFGDVGCR. A disulfide bridge connects residues C122 and C198. Residues 124-145 form a helical membrane-spanning segment; the sequence is VLFSLDFLTMHASIFTLTIMSS. Over 146–166 the chain is Cytoplasmic; that stretch reads ERYAAVLRPLDTVQRSKGYRK. The helical transmembrane segment at 167–185 threads the bilayer; that stretch reads LLALGTWLLALLLTLPMML. Residues 186–208 lie on the Extracellular side of the membrane; sequence AIRLVRRGSKSLCLPAWGPRAHR. A helical membrane pass occupies residues 209 to 231; sequence TYLTLLFGTSIVGPGLVIGLLYI. At 232–257 the chain is on the cytoplasmic side; the sequence is RLARAYWLSQQASFKQTRRLPNPRVL. The chain crosses the membrane as a helical span at residues 258 to 283; that stretch reads YLILGIVLLFWACFLPFWLWQLLAQY. Over 284–298 the chain is Extracellular; the sequence is HQAMPLTPETARIIN. Residues 299–320 form a helical membrane-spanning segment; sequence YLTACLTYGNSCINPFLYTLLT. At 321-385 the chain is on the cytoplasmic side; sequence KNYREYLRGR…SPVPPNGAFV (65 aa).

The protein belongs to the G-protein coupled receptor 1 family.

It localises to the cell membrane. Its function is as follows. High affinity receptor for urotensin-2 and urotensin-2B. The activity of this receptor is mediated by a G-protein that activate a phosphatidylinositol-calcium second messenger system. This Mus musculus (Mouse) protein is Urotensin-2 receptor (Uts2r).